We begin with the raw amino-acid sequence, 481 residues long: Membrane-bound lytic murein transglycosylase F (481 aa).

Positions 1–21 are cleaved as a signal peptide; it reads MKPLKLNYFFIGIITLLLALA. The segment at 22–268 is non-LT domain; the sequence is LWPSIPWRSS…RLEEKYLGHV (247 aa). The tract at residues 269–481 is LT domain; sequence GEFDYVDTTT…PAVPLTKVPE (213 aa). The active site involves glutamate 313.

In the N-terminal section; belongs to the bacterial solute-binding protein 3 family. It in the C-terminal section; belongs to the transglycosylase Slt family.

The protein resides in the cell outer membrane. It catalyses the reaction Exolytic cleavage of the (1-&gt;4)-beta-glycosidic linkage between N-acetylmuramic acid (MurNAc) and N-acetylglucosamine (GlcNAc) residues in peptidoglycan, from either the reducing or the non-reducing ends of the peptidoglycan chains, with concomitant formation of a 1,6-anhydrobond in the MurNAc residue.. Its function is as follows. Murein-degrading enzyme that degrades murein glycan strands and insoluble, high-molecular weight murein sacculi, with the concomitant formation of a 1,6-anhydromuramoyl product. Lytic transglycosylases (LTs) play an integral role in the metabolism of the peptidoglycan (PG) sacculus. Their lytic action creates space within the PG sacculus to allow for its expansion as well as for the insertion of various structures such as secretion systems and flagella. In Pectobacterium atrosepticum (strain SCRI 1043 / ATCC BAA-672) (Erwinia carotovora subsp. atroseptica), this protein is Membrane-bound lytic murein transglycosylase F.